The sequence spans 220 residues: 2-hydroxy-3-keto-5-methylthiopentenyl-1-phosphate phosphatase (220 aa).

The protein belongs to the HAD-like hydrolase superfamily. MtnX family.

The enzyme catalyses 2-hydroxy-5-methylsulfanyl-3-oxopent-1-enyl phosphate + H2O = 1,2-dihydroxy-5-(methylsulfanyl)pent-1-en-3-one + phosphate. It functions in the pathway amino-acid biosynthesis; L-methionine biosynthesis via salvage pathway; L-methionine from S-methyl-5-thio-alpha-D-ribose 1-phosphate: step 4/6. Its function is as follows. Dephosphorylates 2-hydroxy-3-keto-5-methylthiopentenyl-1-phosphate (HK-MTPenyl-1-P) yielding 1,2-dihydroxy-3-keto-5-methylthiopentene (DHK-MTPene). This chain is 2-hydroxy-3-keto-5-methylthiopentenyl-1-phosphate phosphatase, found in Geobacillus kaustophilus (strain HTA426).